A 184-amino-acid chain; its full sequence is MRTFSPKLLLLLLLVLRHHAESGSIVKFLPGFEGPLPFELETGYIGIAKYWANDERVREALQIRKGSIGKWIRCNSNIHYDDDIISSIPYHMNNSINGYRSLIYSGDHDMEVPFLATEAWIRSLNYPIIDDWRPWIINNQIAGYTMTYANKMTYATIKASGHTAEYKPAESFIMFQRWISGQPL.

A signal peptide spans 1-22 (MRTFSPKLLLLLLLVLRHHAES). A glycan (N-linked (GlcNAc...) asparagine) is linked at asparagine 93.

The protein belongs to the peptidase S10 family.

It localises to the secreted. This chain is Putative serine carboxypeptidase-like 52 (SCPL52), found in Arabidopsis thaliana (Mouse-ear cress).